The sequence spans 94 residues: Conotoxin Gla-MrII (94 aa).

An N-terminal signal peptide occupies residues 1–25 (MFGHTSVSFLLLSIVALGMVATVIC). A 4-carboxyglutamate mark is found at E30, E34, E37, E40, and E41. Residues 78-94 (STHMQKRFLRMPRDLAD) constitute a propeptide that is removed on maturation.

The protein belongs to the conotoxin I2 superfamily. Post-translationally, contains 4 disulfide bonds. As to expression, expressed by the venom duct.

The protein resides in the secreted. The chain is Conotoxin Gla-MrII from Conus marmoreus (Marble cone).